The following is a 394-amino-acid chain: Guanine nucleotide-binding protein G(s) subunit alpha isoforms short (394 aa).

Residues M1–N23 form a disordered region. The N-palmitoyl glycine moiety is linked to residue G2. C3 carries S-palmitoyl cysteine lipidation. The segment covering K8–N23 has biased composition (basic and acidic residues). Positions A39–L394 constitute a G-alpha domain. The G1 motif stretch occupies residues R42–T55. A GTP-binding site is contributed by G47 to T55. S54 is a Mg(2+) binding site. Residues F68–T90 are disordered. A G2 motif region spans residues D196–T204. Residues L197–T204, D223–Q227, and N292–D295 contribute to the GTP site. Residue T204 participates in Mg(2+) binding. Residues F219–R228 are G3 motif. Residues I288–D295 form a G4 motif region. A Glycyl lysine isopeptide (Lys-Gly) (interchain with G-Cter in ubiquitin) cross-link involves residue K300. A Phosphoserine modification is found at S352. A G5 motif region spans residues T364–T369. GTP is bound at residue A366.

Belongs to the G-alpha family. G(s) subfamily. Heterotrimeric G proteins are composed of 3 units; alpha, beta and gamma. The alpha chain contains the guanine nucleotide binding site. Component of the TAS2R14-GNAS2 complex, consisting of TAS2R14, GNAS2, GNB1 and GNG2; within the complex interacts with TAS2R14; this complex plays a role in the perception of bitterness. Interacts with CRY1; the interaction may block GPCR-mediated regulation of cAMP concentrations. Interacts with ADCY6 and stimulates its adenylyl cyclase activity. Interacts with ADCY2 and ADCY5. Interacts (GDP-bound form) with RIC8B; promoting GNAS folding and association with the plasma membrane. Stimulates the ADCY5 adenylyl cyclase activity. Interaction with SASH1. Interacts with GASL2L2.

The protein resides in the cell membrane. The enzyme catalyses GTP + H2O = GDP + phosphate + H(+). Guanine nucleotide-binding proteins (G proteins) function as transducers in numerous signaling pathways controlled by G protein-coupled receptors (GPCRs). The alpha chain contains the guanine nucleotide binding site and alternates between an active, GTP-bound state and an inactive, GDP-bound state. Signaling by an activated GPCR promotes GDP release and GTP binding. The alpha subunit has a low GTPase activity that converts bound GTP to GDP, thereby terminating the signal. Both GDP release and GTP hydrolysis are modulated by numerous regulatory proteins. Signaling involves the activation of adenylyl cyclases, resulting in increased levels of the signaling molecule cAMP. Functions downstream of beta-adrenergic receptors. Stimulates the Ras signaling pathway via RAPGEF2. The polypeptide is Guanine nucleotide-binding protein G(s) subunit alpha isoforms short (Gnas) (Mus musculus (Mouse)).